Here is a 485-residue protein sequence, read N- to C-terminus: NADH-quinone oxidoreductase subunit N (485 aa).

The next 14 helical transmembrane spans lie at 8–28 (LIAL…MLSI), 35–55 (FLNA…LWFV), 75–95 (LYTG…YPWL), 105–125 (FYLL…ANHL), 127–147 (ALFL…GYAF), 159–179 (YTIL…LVYA), 203–223 (LLAG…LVPF), 235–255 (PAPV…GVVM), 271–291 (VVLG…ALSQ), 297–317 (LLGY…IALQ), 326–346 (VGVY…VVSL), 374–394 (AVMT…GFIG), 408–430 (WWLV…RVAV), and 455–475 (IVVL…QPLI).

Belongs to the complex I subunit 2 family. NDH-1 is composed of 13 different subunits. Subunits NuoA, H, J, K, L, M, N constitute the membrane sector of the complex.

It localises to the cell inner membrane. The catalysed reaction is a quinone + NADH + 5 H(+)(in) = a quinol + NAD(+) + 4 H(+)(out). Functionally, NDH-1 shuttles electrons from NADH, via FMN and iron-sulfur (Fe-S) centers, to quinones in the respiratory chain. The immediate electron acceptor for the enzyme in this species is believed to be ubiquinone. Couples the redox reaction to proton translocation (for every two electrons transferred, four hydrogen ions are translocated across the cytoplasmic membrane), and thus conserves the redox energy in a proton gradient. This is NADH-quinone oxidoreductase subunit N from Klebsiella pneumoniae (strain 342).